We begin with the raw amino-acid sequence, 99 residues long: Integration host factor subunit beta (99 aa).

Belongs to the bacterial histone-like protein family. In terms of assembly, heterodimer of an alpha and a beta chain.

This protein is one of the two subunits of integration host factor, a specific DNA-binding protein that functions in genetic recombination as well as in transcriptional and translational control. The polypeptide is Integration host factor subunit beta (Laribacter hongkongensis (strain HLHK9)).